Here is a 376-residue protein sequence, read N- to C-terminus: PqqA peptide cyclase (376 aa).

The 216-residue stretch at 4-219 folds into the Radical SAM core domain; it reads VPPPLSVLLE…VETARRSLGD (216 aa). [4Fe-4S] cluster contacts are provided by Cys18, Cys22, and Cys25.

It belongs to the radical SAM superfamily. PqqE family. Interacts with PqqD. The interaction is necessary for activity of PqqE. Requires [4Fe-4S] cluster as cofactor.

The catalysed reaction is [PQQ precursor protein] + S-adenosyl-L-methionine = E-Y cross-linked-[PQQ precursor protein] + 5'-deoxyadenosine + L-methionine + H(+). The protein operates within cofactor biosynthesis; pyrroloquinoline quinone biosynthesis. Functionally, catalyzes the cross-linking of a glutamate residue and a tyrosine residue in the PqqA protein as part of the biosynthesis of pyrroloquinoline quinone (PQQ). The chain is PqqA peptide cyclase from Xanthomonas campestris pv. campestris (strain 8004).